Reading from the N-terminus, the 541-residue chain is Membrane protein insertase YidC (541 aa).

The chain crosses the membrane as a helical span at residues 6 to 26 (SLLVLALIFISFLVYQQWQLD). Positions 34–56 (EQTTSITATSDVPASSPSNSQAI) are disordered. 4 helical membrane-spanning segments follow: residues 337 to 357 (FWLL…IICV), 416 to 436 (LGGC…YWTF), 454 to 474 (LSAQ…MFLL), and 495 to 515 (PLIF…YWLV).

It belongs to the OXA1/ALB3/YidC family. Type 1 subfamily. As to quaternary structure, interacts with the Sec translocase complex via SecD. Specifically interacts with transmembrane segments of nascent integral membrane proteins during membrane integration.

It localises to the cell inner membrane. Required for the insertion and/or proper folding and/or complex formation of integral membrane proteins into the membrane. Involved in integration of membrane proteins that insert both dependently and independently of the Sec translocase complex, as well as at least some lipoproteins. Aids folding of multispanning membrane proteins. The polypeptide is Membrane protein insertase YidC (Haemophilus influenzae (strain PittEE)).